Here is a 389-residue protein sequence, read N- to C-terminus: MADPRDKALQDYRKKLLEHKEIDGRLKELREQLKELTKQYEKSENDLKALQSVGQIVGEVLKQLTEEKFIVKATNGPRYVVGCRRQLDKSKLKPGTRVALDMTTLTIMRYLPREVDPLVYNMSHEDPGNVSYSEIGGLSEQIRELREVIELPLTNPELFQRVGIIPPKGCLLYGPPGTGKTLLARAVASQLDCNFLKVVSSSIVDKYIGESARLIREMFNYARDHQPCIIFMDEIDAIGGRRFSEGTSADREIQRTLMELLNQMDGFDTLHRVKMIMATNRPDTLDPALLRPGRLDRKIHIDLPNEQARLDILKIHAGPITKHGEIDYEAIVKLSDGFNGADLRNVCTEAGMFAIRADHDFVVQEDFMKAVRKVADSKKLESKLDYKPV.

An N6-acetyllysine modification is found at Lys72. 174-181 (GPPGTGKT) is an ATP binding site. Lys206 carries the N6-acetyllysine modification. Position 244 is a phosphoserine (Ser244).

It belongs to the AAA ATPase family. In terms of assembly, component of the 19S proteasome regulatory particle complex. The 26S proteasome consists of a 20S core particle (CP) and two 19S regulatory subunits (RP). The regulatory particle is made of a lid composed of 9 subunits, a base containing 6 ATPases including PSMC6 and few additional components. Interacts with PAAF1.

Its subcellular location is the cytoplasm. It localises to the nucleus. In terms of biological role, component of the 26S proteasome, a multiprotein complex involved in the ATP-dependent degradation of ubiquitinated proteins. This complex plays a key role in the maintenance of protein homeostasis by removing misfolded or damaged proteins, which could impair cellular functions, and by removing proteins whose functions are no longer required. Therefore, the proteasome participates in numerous cellular processes, including cell cycle progression, apoptosis, or DNA damage repair. PSMC6 belongs to the heterohexameric ring of AAA (ATPases associated with diverse cellular activities) proteins that unfolds ubiquitinated target proteins that are concurrently translocated into a proteolytic chamber and degraded into peptides. This is 26S proteasome regulatory subunit 10B (PSMC6) from Homo sapiens (Human).